Consider the following 275-residue polypeptide: MQNITDSWFVQGMIKATSDAWLKGWDERNGGNLTLRLDETDIAPFAANFHEKPRYIALSQPMPLLTNTPFIVTGSGKFFRNVQLDPAANLGVVKIDSDGAGYHILWGLTHDAVPTSELPAHFLSHCERIKATHGKDRVIMHCHATNLIALTYVLENNTALITRKLWEGSTECLVVFPDGVGILPWMVPGTDEIGQATAQEMQKHSLVLWPFHGVFGSGPTLDETFGLIDTAEKSAEVLVKIYSMGGMKQTITREELVALGKRFGVTPLASAVALY.

The active site involves Glu117. 3 residues coordinate Zn(2+): His141, His143, and His212.

The protein belongs to the aldolase class II family. RhaD subfamily. In terms of assembly, homotetramer. Zn(2+) serves as cofactor.

The protein localises to the cytoplasm. The enzyme catalyses L-rhamnulose 1-phosphate = (S)-lactaldehyde + dihydroxyacetone phosphate. The protein operates within carbohydrate degradation; L-rhamnose degradation; glycerone phosphate from L-rhamnose: step 3/3. In terms of biological role, catalyzes the reversible cleavage of L-rhamnulose-1-phosphate to dihydroxyacetone phosphate (DHAP) and L-lactaldehyde. The protein is Rhamnulose-1-phosphate aldolase of Salmonella paratyphi C (strain RKS4594).